Consider the following 373-residue polypeptide: DNA replication and repair protein RecF (373 aa).

30–37 (GPNGQGKT) is a binding site for ATP.

Belongs to the RecF family.

It is found in the cytoplasm. Functionally, the RecF protein is involved in DNA metabolism; it is required for DNA replication and normal SOS inducibility. RecF binds preferentially to single-stranded, linear DNA. It also seems to bind ATP. This Streptomyces avermitilis (strain ATCC 31267 / DSM 46492 / JCM 5070 / NBRC 14893 / NCIMB 12804 / NRRL 8165 / MA-4680) protein is DNA replication and repair protein RecF.